A 213-amino-acid chain; its full sequence is Phosphoheptose isomerase (213 aa).

In terms of domain architecture, SIS spans 50–208 (MAETFEGGGR…IDLVERMLGY (159 aa)). 65-67 (NGG) is a binding site for substrate. Histidine 74 and glutamate 78 together coordinate Zn(2+). Residues glutamate 78, 109–110 (ND), 135–137 (STS), serine 140, and glutamine 188 each bind substrate. Residues glutamine 188 and histidine 196 each coordinate Zn(2+).

It belongs to the SIS family. GmhA subfamily. It depends on Zn(2+) as a cofactor.

The protein resides in the cytoplasm. It catalyses the reaction 2 D-sedoheptulose 7-phosphate = D-glycero-alpha-D-manno-heptose 7-phosphate + D-glycero-beta-D-manno-heptose 7-phosphate. The protein operates within carbohydrate biosynthesis; D-glycero-D-manno-heptose 7-phosphate biosynthesis; D-glycero-alpha-D-manno-heptose 7-phosphate and D-glycero-beta-D-manno-heptose 7-phosphate from sedoheptulose 7-phosphate: step 1/1. Catalyzes the isomerization of sedoheptulose 7-phosphate in D-glycero-D-manno-heptose 7-phosphate. The protein is Phosphoheptose isomerase of Chlorobium phaeovibrioides (strain DSM 265 / 1930) (Prosthecochloris vibrioformis (strain DSM 265)).